Reading from the N-terminus, the 205-residue chain is Macrophage immunometabolism regulator (205 aa).

Residues 1 to 40 form a disordered region; that stretch reads MEVDINGVNRTNNSVPSTTEGSSPSKPDPEKPRCSSTPCS. Over residues 8-25 the composition is skewed to polar residues; the sequence is VNRTNNSVPSTTEGSSPS.

The protein belongs to the UNC119-binding protein family. As to quaternary structure, interacts with unc119 family proteins; interaction preferentially takes place when unc119 proteins are unliganded with myristoylated proteins.

Its subcellular location is the cytoplasm. It is found in the cell projection. The protein localises to the cilium. May play a role in immune regulation through regulation of the macrophage function. May also play a role in trafficking of proteins via its interaction with unc119 family cargo adapters. May play a role in ciliary membrane localization. This Xenopus tropicalis (Western clawed frog) protein is Macrophage immunometabolism regulator (macir).